We begin with the raw amino-acid sequence, 275 residues long: Dermonecrotic toxin SpeSicTox-betaIIA3ii (275 aa).

His5 is an active-site residue. Residues Glu25 and Asp27 each contribute to the Mg(2+) site. His41 (nucleophile) is an active-site residue. 2 disulfides stabilise this stretch: Cys45–Cys51 and Cys47–Cys190. Asp85 is a Mg(2+) binding site.

This sequence belongs to the arthropod phospholipase D family. Class II subfamily. It depends on Mg(2+) as a cofactor. Expressed by the venom gland.

The protein resides in the secreted. The enzyme catalyses an N-(acyl)-sphingosylphosphocholine = an N-(acyl)-sphingosyl-1,3-cyclic phosphate + choline. It catalyses the reaction an N-(acyl)-sphingosylphosphoethanolamine = an N-(acyl)-sphingosyl-1,3-cyclic phosphate + ethanolamine. It carries out the reaction a 1-acyl-sn-glycero-3-phosphocholine = a 1-acyl-sn-glycero-2,3-cyclic phosphate + choline. The catalysed reaction is a 1-acyl-sn-glycero-3-phosphoethanolamine = a 1-acyl-sn-glycero-2,3-cyclic phosphate + ethanolamine. Dermonecrotic toxins cleave the phosphodiester linkage between the phosphate and headgroup of certain phospholipids (sphingolipid and lysolipid substrates), forming an alcohol (often choline) and a cyclic phosphate. This toxin acts on sphingomyelin (SM). It may also act on ceramide phosphoethanolamine (CPE), lysophosphatidylcholine (LPC) and lysophosphatidylethanolamine (LPE), but not on lysophosphatidylserine (LPS), and lysophosphatidylglycerol (LPG). It acts by transphosphatidylation, releasing exclusively cyclic phosphate products as second products. Induces dermonecrosis, hemolysis, increased vascular permeability, edema, inflammatory response, and platelet aggregation. The polypeptide is Dermonecrotic toxin SpeSicTox-betaIIA3ii (Sicarius peruensis (Six-eyed sand spider)).